Reading from the N-terminus, the 196-residue chain is Inosine triphosphate pyrophosphatase 2 (196 aa).

20–25 (TGNDGK) contacts ITP. Glutamate 48 contacts Mg(2+). Residues lysine 61, 77-78 (DT), lysine 94, 153-156 (FGWD), lysine 177, and 182-183 (PR) each bind ITP.

It belongs to the HAM1 NTPase family. As to quaternary structure, homodimer. It depends on Mg(2+) as a cofactor. The cofactor is Mn(2+).

It localises to the cytoplasm. It catalyses the reaction ITP + H2O = IMP + diphosphate + H(+). The enzyme catalyses dITP + H2O = dIMP + diphosphate + H(+). The catalysed reaction is XTP + H2O = XMP + diphosphate + H(+). Pyrophosphatase that hydrolyzes non-canonical purine nucleotides such as inosine triphosphate (ITP), deoxyinosine triphosphate (dITP) or xanthosine 5'-triphosphate (XTP) to their respective monophosphate derivatives. The enzyme does not distinguish between the deoxy- and ribose forms. Probably excludes non-canonical purines from RNA and DNA precursor pools, thus preventing their incorporation into RNA and DNA and avoiding chromosomal lesions. The protein is Inosine triphosphate pyrophosphatase 2 of Trypanosoma cruzi (strain CL Brener).